We begin with the raw amino-acid sequence, 312 residues long: Ribose-phosphate pyrophosphokinase (312 aa).

ATP-binding positions include 34–36 and 93–94; these read DGE and RQ. Mg(2+) is bound by residues His128 and Asp167. Lys191 is a catalytic residue. Residues Arg193 and Asp217 each coordinate D-ribose 5-phosphate.

This sequence belongs to the ribose-phosphate pyrophosphokinase family. Class I subfamily. As to quaternary structure, homohexamer. It depends on Mg(2+) as a cofactor.

Its subcellular location is the cytoplasm. The enzyme catalyses D-ribose 5-phosphate + ATP = 5-phospho-alpha-D-ribose 1-diphosphate + AMP + H(+). Its pathway is metabolic intermediate biosynthesis; 5-phospho-alpha-D-ribose 1-diphosphate biosynthesis; 5-phospho-alpha-D-ribose 1-diphosphate from D-ribose 5-phosphate (route I): step 1/1. Functionally, involved in the biosynthesis of the central metabolite phospho-alpha-D-ribosyl-1-pyrophosphate (PRPP) via the transfer of pyrophosphoryl group from ATP to 1-hydroxyl of ribose-5-phosphate (Rib-5-P). The polypeptide is Ribose-phosphate pyrophosphokinase (Baumannia cicadellinicola subsp. Homalodisca coagulata).